We begin with the raw amino-acid sequence, 129 residues long: NADH-quinone oxidoreductase subunit A (129 aa).

The next 3 membrane-spanning stretches (helical) occupy residues Leu14–Leu34, Phe67–Ala87, and Trp95–Leu115.

Belongs to the complex I subunit 3 family. As to quaternary structure, NDH-1 is composed of 14 different subunits. Subunits NuoA, H, J, K, L, M, N constitute the membrane sector of the complex.

It localises to the cell inner membrane. It carries out the reaction a quinone + NADH + 5 H(+)(in) = a quinol + NAD(+) + 4 H(+)(out). Its function is as follows. NDH-1 shuttles electrons from NADH, via FMN and iron-sulfur (Fe-S) centers, to quinones in the respiratory chain. The immediate electron acceptor for the enzyme in this species is believed to be ubiquinone. Couples the redox reaction to proton translocation (for every two electrons transferred, four hydrogen ions are translocated across the cytoplasmic membrane), and thus conserves the redox energy in a proton gradient. In Rhodopseudomonas palustris (strain HaA2), this protein is NADH-quinone oxidoreductase subunit A.